The primary structure comprises 270 residues: Urease accessory protein UreD (270 aa).

This sequence belongs to the UreD family. UreD, UreF and UreG form a complex that acts as a GTP-hydrolysis-dependent molecular chaperone, activating the urease apoprotein by helping to assemble the nickel containing metallocenter of UreC. The UreE protein probably delivers the nickel.

The protein localises to the cytoplasm. Required for maturation of urease via the functional incorporation of the urease nickel metallocenter. The protein is Urease accessory protein UreD of Klebsiella pneumoniae.